A 160-amino-acid polypeptide reads, in one-letter code: Cell division protein SepF (160 aa).

Positions 18–30 (AEGEDDFEDDVDT) are enriched in acidic residues. Residues 18 to 72 (AEGEDDFEDDVDTGETSFDSDHSVTPMPSSSASASTPSAPREQSNPFQGGRVSRI) are disordered. Residues 45–57 (PSSSASASTPSAP) show a composition bias toward low complexity.

Belongs to the SepF family. In terms of assembly, homodimer. Interacts with FtsZ.

It localises to the cytoplasm. In terms of biological role, cell division protein that is part of the divisome complex and is recruited early to the Z-ring. Probably stimulates Z-ring formation, perhaps through the cross-linking of FtsZ protofilaments. Its function overlaps with FtsA. This is Cell division protein SepF from Bifidobacterium adolescentis (strain ATCC 15703 / DSM 20083 / NCTC 11814 / E194a).